We begin with the raw amino-acid sequence, 343 residues long: RNA 3'-terminal phosphate cyclase (343 aa).

ATP contacts are provided by residues Gln102 and 284 to 288 (FLGDQ). His308 functions as the Tele-AMP-histidine intermediate in the catalytic mechanism.

It belongs to the RNA 3'-terminal cyclase family. Type 1 subfamily.

Its subcellular location is the cytoplasm. The enzyme catalyses a 3'-end 3'-phospho-ribonucleotide-RNA + ATP = a 3'-end 2',3'-cyclophospho-ribonucleotide-RNA + AMP + diphosphate. Catalyzes the conversion of 3'-phosphate to a 2',3'-cyclic phosphodiester at the end of RNA. The mechanism of action of the enzyme occurs in 3 steps: (A) adenylation of the enzyme by ATP; (B) transfer of adenylate to an RNA-N3'P to produce RNA-N3'PP5'A; (C) and attack of the adjacent 2'-hydroxyl on the 3'-phosphorus in the diester linkage to produce the cyclic end product. The biological role of this enzyme is unknown but it is likely to function in some aspects of cellular RNA processing. This is RNA 3'-terminal phosphate cyclase (rtcA) from Thermococcus kodakarensis (strain ATCC BAA-918 / JCM 12380 / KOD1) (Pyrococcus kodakaraensis (strain KOD1)).